A 337-amino-acid chain; its full sequence is Carbonic anhydrase 14 (337 aa).

Positions 1 to 15 are cleaved as a signal peptide; that stretch reads MLFSALLLEVIWILA. Over 16-290 the chain is Extracellular; the sequence is ADGGQHWTYE…AGSSYTTGEM (275 aa). An Alpha-carbonic anhydrase domain is found at 20 to 278; sequence QHWTYEGPHG…LNQRMVFASF (259 aa). Cysteine 40 and cysteine 221 are disulfide-bonded. Histidine 84 (proton donor/acceptor) is an active-site residue. Zn(2+) is bound by residues histidine 109, histidine 111, and histidine 135. N-linked (GlcNAc...) asparagine glycosylation is present at asparagine 213. 217 to 218 provides a ligand contact to substrate; that stretch reads TT. The chain crosses the membrane as a helical span at residues 291 to 311; the sequence is LSLGVGILVGCLCLLLAVYFI. The Cytoplasmic segment spans residues 312–337; the sequence is ARKIRKKRLENRKSVVFTSAQATTEA. A Phosphoserine modification is found at serine 325.

The protein belongs to the alpha-carbonic anhydrase family. Zn(2+) serves as cofactor. High expression in all parts of the central nervous system and lower expression in adult liver, heart, small intestine, colon, kidney, urinary bladder and skeletal muscle.

The protein resides in the membrane. It catalyses the reaction hydrogencarbonate + H(+) = CO2 + H2O. Activated by histamine, L-adrenaline, L- and D-histidine, and L- and D-phenylalanine. Inhibited by coumarins, saccharin, sulfonamide derivatives such as acetazolamide (AZA) and Foscarnet (phosphonoformate trisodium salt). Its function is as follows. Reversible hydration of carbon dioxide. The chain is Carbonic anhydrase 14 (CA14) from Homo sapiens (Human).